Reading from the N-terminus, the 552-residue chain is Chaperonin GroEL (552 aa).

ATP-binding positions include 29-32, Lys50, 86-90, Gly417, and Asp499; these read TAGP and DGTTT.

It belongs to the chaperonin (HSP60) family. In terms of assembly, forms a cylinder of 14 subunits composed of two heptameric rings stacked back-to-back. Interacts with the co-chaperonin GroES.

The protein resides in the cytoplasm. The enzyme catalyses ATP + H2O + a folded polypeptide = ADP + phosphate + an unfolded polypeptide.. In terms of biological role, together with its co-chaperonin GroES, plays an essential role in assisting protein folding. The GroEL-GroES system forms a nano-cage that allows encapsulation of the non-native substrate proteins and provides a physical environment optimized to promote and accelerate protein folding. The protein is Chaperonin GroEL of Ehrlichia canis (strain Jake).